The sequence spans 202 residues: Recoverin (202 aa).

A lipid anchor (N-myristoyl glycine) is attached at G2. At C39 the chain carries Cysteine sulfenic acid (-SOH). EF-hand domains lie at 41-59 (SGRITKQEFQSIYSKFFPE), 61-96 (DPKAYAQHVFRSFDANSDGTLDFKEYVIALHMTSAG), 97-132 (KTNQKLEWAFSLYDVDGNGAISKSEVLEIVMAIFKM), and 147-182 (TPEKRAEKIWGFFGKKDDDKLTEEEFIEGTLANKEI). Residues D74, N76, D78, T80, E85, D110, D112, N114, and E121 each contribute to the Ca(2+) site. The interval 189 to 192 (EPRK) is interaction with GRK1.

It belongs to the recoverin family. Homodimer; disulfide-linked. Homodimerization is caused by prolonged intense illumination. May form a complex composed of RHO, GRK1 and RCVRN in a Ca(2+)-dependent manner; RCVRN prevents the interaction between GRK1 and RHO. Interacts (via C-terminus) with GRK1 (via N-terminus); the interaction is Ca(2+)-dependent. The N-terminal glycine is linked to one of four different types of acyl groups. The most abundant is myristoleate (14:1), but 14:0, 14:2, and 12:0 acyl residues are also present. The Ca(2+) induced exposure of the myristoyl group, known as the calcium-myristoyl switch, promotes RCVRN binding to the photoreceptor cell membranes only when intracellular Ca(2+) concentration is high. Post-translationally, oxidation on Cys-39 occurs in response to prolonged intense illumination and results in the formation of disulfide homodimers, and to a lesser extent disulfide-linked heterodimers.

The protein localises to the photoreceptor inner segment. Its subcellular location is the cell projection. It is found in the cilium. It localises to the photoreceptor outer segment. The protein resides in the photoreceptor outer segment membrane. The protein localises to the perikaryon. In terms of biological role, acts as a calcium sensor and regulates phototransduction of cone and rod photoreceptor cells. Modulates light sensitivity of cone photoreceptor in dark and dim conditions. In response to high Ca(2+) levels induced by low light levels, prolongs RHO/rhodopsin activation in rod photoreceptor cells by binding to and inhibiting GRK1-mediated phosphorylation of RHO/rhodopsin. Plays a role in scotopic vision/enhances vision in dim light by enhancing signal transfer between rod photoreceptors and rod bipolar cells. Improves rod photoreceptor sensitivity in dim light and mediates response of rod photoreceptors to facilitate detection of change and motion in bright light. The protein is Recoverin (RCVRN) of Canis lupus familiaris (Dog).